Here is a 146-residue protein sequence, read N- to C-terminus: 1,4-dihydroxy-2-naphthoyl-CoA hydrolase (146 aa).

Asp-19 is an active-site residue.

This sequence belongs to the 4-hydroxybenzoyl-CoA thioesterase family. DHNA-CoA hydrolase subfamily.

It carries out the reaction 1,4-dihydroxy-2-naphthoyl-CoA + H2O = 1,4-dihydroxy-2-naphthoate + CoA + H(+). Its pathway is cofactor biosynthesis; phylloquinone biosynthesis. It functions in the pathway quinol/quinone metabolism; 1,4-dihydroxy-2-naphthoate biosynthesis; 1,4-dihydroxy-2-naphthoate from chorismate: step 7/7. Functionally, catalyzes the hydrolysis of 1,4-dihydroxy-2-naphthoyl-CoA (DHNA-CoA) to 1,4-dihydroxy-2-naphthoate (DHNA), a reaction involved in phylloquinone (vitamin K1) biosynthesis. The polypeptide is 1,4-dihydroxy-2-naphthoyl-CoA hydrolase (Thermosynechococcus vestitus (strain NIES-2133 / IAM M-273 / BP-1)).